Consider the following 307-residue polypeptide: Ribonuclease Z (307 aa).

H63, H65, D67, H68, H141, D212, and H270 together coordinate Zn(2+). The active-site Proton acceptor is the D67.

It belongs to the RNase Z family. As to quaternary structure, homodimer. The cofactor is Zn(2+).

It catalyses the reaction Endonucleolytic cleavage of RNA, removing extra 3' nucleotides from tRNA precursor, generating 3' termini of tRNAs. A 3'-hydroxy group is left at the tRNA terminus and a 5'-phosphoryl group is left at the trailer molecule.. Its function is as follows. Zinc phosphodiesterase, which displays some tRNA 3'-processing endonuclease activity. Probably involved in tRNA maturation, by removing a 3'-trailer from precursor tRNA. The sequence is that of Ribonuclease Z from Bacillus cereus (strain ATCC 14579 / DSM 31 / CCUG 7414 / JCM 2152 / NBRC 15305 / NCIMB 9373 / NCTC 2599 / NRRL B-3711).